The following is a 105-amino-acid chain: Circadian clock oscillator protein KaiB (105 aa).

The protein belongs to the KaiB family. As to quaternary structure, the KaiABC complex composition changes during the circadian cycle to control KaiC phosphorylation. Complexes KaiC(6), KaiA(2-4):KaiC(6), KaiB(6):KaiC(6) and KaiC(6):KaiB(6):KaiA(12) are among the most important forms, many form cooperatively. Undergoes a major conformational rearrangment; in the free state forms homotetramers as a dimer of dimers. When bound to the CI domain of KaiC switches to a monomeric thioredoxin-fold (KaiB(fs)). KaiB(fs) binds CikA, leading it to dephosphorylate phospho-RpaA.

Functionally, key component of the KaiABC oscillator complex, which constitutes the main circadian regulator in cyanobacteria. Complex composition changes during the circadian cycle to control KaiC phosphorylation. KaiA stimulates KaiC autophosphorylation, while KaiB sequesters KaiA, leading to KaiC autodephosphorylation. Phospho-Ser-431 KaiC accumulation triggers binding of KaiB to form the KaiB(6):KaiC(6) complex, leading to changes in output regulators CikA and SasA. KaiB switches to a thioredoxin-like fold (KaiB(fs)) when bound to KaiC. KaiB(6):KaiC(6) formation exposes a site for KaiA binding that sequesters KaiA from KaiC, making the KaiC(6):KaiB(6):KaiA(12) complex that results in KaiC autodephosphorylation. A metamorphic protein which reversibly switches between an inactive tetrameric fold and a rare, thioredoxin-like monomeric fold (KaiB(fs)). KaiB(fs) binds phospho-KaiC, KaiA and CikA. KaiA and CikA compete for binding to KaiB(fs), and KaiB(fs) and SasA compete for binding to KaiC, thus the clock oscillator and output signal pathway are tightly coupled. The sequence is that of Circadian clock oscillator protein KaiB from Cyanothece sp. (strain PCC 7425 / ATCC 29141).